We begin with the raw amino-acid sequence, 367 residues long: Glutamate 5-kinase (367 aa).

K10 contacts ATP. S50, D137, and N149 together coordinate substrate. Residues 169–170 (TD) and 211–217 (TGGMGTK) each bind ATP. Residues 275 to 353 (AGELTVDAGA…QQIDAILGYE (79 aa)) enclose the PUA domain.

This sequence belongs to the glutamate 5-kinase family.

The protein resides in the cytoplasm. The catalysed reaction is L-glutamate + ATP = L-glutamyl 5-phosphate + ADP. The protein operates within amino-acid biosynthesis; L-proline biosynthesis; L-glutamate 5-semialdehyde from L-glutamate: step 1/2. Catalyzes the transfer of a phosphate group to glutamate to form L-glutamate 5-phosphate. This chain is Glutamate 5-kinase, found in Klebsiella pneumoniae (strain 342).